We begin with the raw amino-acid sequence, 157 residues long: Cell cycle regulator of non-homologous end joining (157 aa).

Methionine 1 bears the N-acetylmethionine mark. The KBM motif lies at 1-21; it reads METLQSETKTRVLPSWLTAQV. Residues 77 to 147 form a disordered region; sequence KACEQPALAG…SPEEEEEEDV (71 aa). Positions 98–107 are enriched in low complexity; that stretch reads VSPHTSSGSS. Polar residues predominate over residues 123–136; it reads SPSQRPGGSSSACS. Residues 147–157 carry the XLM motif; that stretch reads VLKYVREIFFS.

Interacts (via KBM motif) with XRCC5/Ku80 and XRCC6/Ku70 heterodimer. Interacts (via XLF motif) with TRIM28/KAP1, ATM, MRE11, NBN and RAD50. Interacts with splicing factor SF3B1. Interacts with ERCC6L2; this interaction is DNA independent. In terms of assembly, does not interact with XRCC5/Ku80 and XRCC6/Ku70 heterodimer. As to quaternary structure, interacts (via KBM motif) with XRCC5/Ku80 and XRCC6/Ku70 heterodimer.

It localises to the cytoplasm. Its subcellular location is the nucleus. The protein resides in the chromosome. Cell-cycle-specific regulator of classical non-homologous end joining (NHEJ) of DNA double-strand break (DSB) repair, which can act both as an activator or inhibitor of NHEJ, depending on the cell cycle phase. Acts as a regulator of DNA repair pathway choice by specifically inhibiting classical NHEJ during the S and G2 phases, thereby promoting error-free repair by homologous recombination during cell cycle phases when sister chromatids are present. Preferentially protects single-stranded overhangs at break sites by inhibiting classical NHEJ, thereby creating a local environment that favors homologous recombination. Acts via interaction with XRCC5/Ku80 and XRCC6/Ku70. In contrast, acts as an activator of NHEJ during G1 phase of the cell cycle: promotes classical NHEJ in G1 phase cells via multivalent interactions that increase the affinity of DNA damage response proteins for DSB-associated chromatin. Also involved in immunoglobulin V(D)J recombination. May also act as an indirect regulator of proteasome. This is Cell cycle regulator of non-homologous end joining from Homo sapiens (Human).